The sequence spans 145 residues: Ponticulin-like protein B (145 aa).

An N-terminal signal peptide occupies residues 1 to 22; that stretch reads MLFIKSLLLLLSLIFAVSNATG. N34 carries an N-linked (GlcNAc...) asparagine glycan. Residues 107 to 126 are disordered; sequence DTTSSSTSPSSTSPSSTSPA. Residues 108-126 show a composition bias toward low complexity; sequence TTSSSTSPSSTSPSSTSPA. S117 carries GPI-like-anchor amidated serine lipidation. A propeptide spans 118-145 (removed in mature form); sequence TSPSSTSPASTLIGSIAFVTLAALFALI.

The protein belongs to the ponticulin family. The GPI-like-anchor contains a phosphoceramide group, rather than a phosphatidyl group.

The protein resides in the cell membrane. In terms of biological role, binds F-actin and nucleates actin assembly. In Dictyostelium discoideum (Social amoeba), this protein is Ponticulin-like protein B (ponB).